Here is a 92-residue protein sequence, read N- to C-terminus: Conotoxin Im9.4 (92 aa).

The first 20 residues, Met1–Gly20, serve as a signal peptide directing secretion. The propeptide occupies Asn21–Arg62. 3 cysteine pairs are disulfide-bonded: Cys65/Cys79, Cys69/Cys81, and Cys75/Cys87. An Asparagine amide modification is found at Asn90.

Belongs to the conotoxin P superfamily. Expressed by the venom duct.

The protein resides in the secreted. In terms of biological role, probable neurotoxin that inhibits ion channels. The polypeptide is Conotoxin Im9.4 (Conus imperialis (Imperial cone)).